Reading from the N-terminus, the 568-residue chain is Vitamin H transporter 1 (568 aa).

The next 12 helical transmembrane spans lie at 85-105 (IIPCLWILYFLSCCLRFTVSL), 123-143 (GYSAHYLALGLALFYVGYIIF), 158-178 (IWVSRIQLTIGVVGACHAVLG), 187-207 (YVALRFFLGVAESGLWPGLAY), 222-242 (IGWYYTAAQIAAAAVSLVSAG), 257-277 (WMFLIWGVVAIAQALSIPWWL), 345-365 (VWPFILMYFGIVGVGNGIFNY), 384-404 (LLNAPIWLADALGIVTVMPLY), 411-431 (FSFFTGSCLIIIAGLAVANYA), 439-459 (GGLLMIGFGLGPTVPICMAWC), 470-490 (VGVASSLALVTGLGNLGSVVT), and 508-528 (NDVCIALIGVSIIACGIEFLL). The segment at 547–568 (VEDEQEMTDIKPALPSSQQADA) is disordered.

This sequence belongs to the major facilitator superfamily. Allantoate permease family.

Its subcellular location is the membrane. Involved in uptake of biotin and desthiobiotin with the concomitant entry of protons. This is Vitamin H transporter 1 (vht1) from Schizosaccharomyces pombe (strain 972 / ATCC 24843) (Fission yeast).